Reading from the N-terminus, the 564-residue chain is Proline--tRNA ligase (564 aa).

Belongs to the class-II aminoacyl-tRNA synthetase family. ProS type 1 subfamily. In terms of assembly, homodimer.

The protein resides in the cytoplasm. The enzyme catalyses tRNA(Pro) + L-proline + ATP = L-prolyl-tRNA(Pro) + AMP + diphosphate. Functionally, catalyzes the attachment of proline to tRNA(Pro) in a two-step reaction: proline is first activated by ATP to form Pro-AMP and then transferred to the acceptor end of tRNA(Pro). As ProRS can inadvertently accommodate and process non-cognate amino acids such as alanine and cysteine, to avoid such errors it has two additional distinct editing activities against alanine. One activity is designated as 'pretransfer' editing and involves the tRNA(Pro)-independent hydrolysis of activated Ala-AMP. The other activity is designated 'posttransfer' editing and involves deacylation of mischarged Ala-tRNA(Pro). The misacylated Cys-tRNA(Pro) is not edited by ProRS. This Xanthomonas oryzae pv. oryzae (strain KACC10331 / KXO85) protein is Proline--tRNA ligase.